The primary structure comprises 161 residues: 3-isopropylmalate dehydratase small subunit (161 aa).

This sequence belongs to the LeuD family. LeuD type 2 subfamily. In terms of assembly, heterodimer of LeuC and LeuD.

It catalyses the reaction (2R,3S)-3-isopropylmalate = (2S)-2-isopropylmalate. It functions in the pathway amino-acid biosynthesis; L-leucine biosynthesis; L-leucine from 3-methyl-2-oxobutanoate: step 2/4. Its function is as follows. Catalyzes the isomerization between 2-isopropylmalate and 3-isopropylmalate, via the formation of 2-isopropylmaleate. The protein is 3-isopropylmalate dehydratase small subunit of Sulfolobus acidocaldarius (strain ATCC 33909 / DSM 639 / JCM 8929 / NBRC 15157 / NCIMB 11770).